A 194-amino-acid chain; its full sequence is 3-isopropylmalate dehydratase small subunit (194 aa).

It belongs to the LeuD family. LeuD type 1 subfamily. As to quaternary structure, heterodimer of LeuC and LeuD.

It carries out the reaction (2R,3S)-3-isopropylmalate = (2S)-2-isopropylmalate. Its pathway is amino-acid biosynthesis; L-leucine biosynthesis; L-leucine from 3-methyl-2-oxobutanoate: step 2/4. Its function is as follows. Catalyzes the isomerization between 2-isopropylmalate and 3-isopropylmalate, via the formation of 2-isopropylmaleate. This is 3-isopropylmalate dehydratase small subunit from Limosilactobacillus fermentum (strain NBRC 3956 / LMG 18251) (Lactobacillus fermentum).